Reading from the N-terminus, the 431-residue chain is Transposase for insertion sequence element IS232 (431 aa).

The region spanning 20–79 is the HTH IS21-type domain; the sequence is PNFKKLMGNLKMKINKSQLARELNVDRRTIDKYLNGFTPKGTKNKTSKIDTYYEVIAALL. A DNA-binding region (H-T-H motif) is located at residues 35-54; it reads KSQLARELNVDRRTIDKYLN. In terms of domain architecture, Integrase catalytic spans 140–315; it reads YETPPGEQAQ…IPVFALKQEK (176 aa).

This sequence belongs to the transposase IS21/IS408/IS1162 family.

Functionally, involved in the transposition of the insertion sequence. In Bacillus thuringiensis subsp. berliner, this protein is Transposase for insertion sequence element IS232.